The following is a 78-amino-acid chain: Large ribosomal subunit protein bL28 (78 aa).

The segment at 1-28 is disordered; it reads MSRRCQVRGTKPEFGNNVSHSQRHTKRR.

This sequence belongs to the bacterial ribosomal protein bL28 family.

The chain is Large ribosomal subunit protein bL28 from Cutibacterium acnes (strain DSM 16379 / KPA171202) (Propionibacterium acnes).